The sequence spans 1041 residues: FHIP family protein GF15501 (1041 aa).

2 disordered regions span residues 797–856 and 907–987; these read RKGN…NKRR and SNSS…SEPV. Position 803 is a phosphoserine (S803). Positions 808 to 824 are enriched in low complexity; that stretch reads NLQQQQALNPAQQQGQQ. Polar residues-rich tracts occupy residues 825 to 843 and 907 to 933; these read RSAY…TPTS and SNSS…LSTQ. Positions 942 to 973 are enriched in low complexity; it reads SGSSSNSSMGGSSQTLSAHSNATTTHSSSTLH.

Belongs to the FHIP family.

The chain is FHIP family protein GF15501 from Drosophila ananassae (Fruit fly).